The chain runs to 201 residues: MNLDGLIVGLGNPGKEYENTRHNLGFMLADALLDEVRRTAPHAVTSLGTGKKKYDLWKCAPLTGGSSWLVAKPLTFMNRSGDAVAHICGFYRIPPEKILVLHDELDLPLGRMKFKTAGGLAGHNGLKSIAERTGSKDFHRLRLGIGKPQSGQTTGYVLGRFGKDEQALVEKVLQAGVEGIRIFAQQGAVAATQFINAQDIQ.

Position 17 (tyrosine 17) interacts with tRNA. Histidine 22 functions as the Proton acceptor in the catalytic mechanism. 3 residues coordinate tRNA: phenylalanine 76, asparagine 78, and asparagine 124.

This sequence belongs to the PTH family. As to quaternary structure, monomer.

It is found in the cytoplasm. It carries out the reaction an N-acyl-L-alpha-aminoacyl-tRNA + H2O = an N-acyl-L-amino acid + a tRNA + H(+). Functionally, hydrolyzes ribosome-free peptidyl-tRNAs (with 1 or more amino acids incorporated), which drop off the ribosome during protein synthesis, or as a result of ribosome stalling. Catalyzes the release of premature peptidyl moieties from peptidyl-tRNA molecules trapped in stalled 50S ribosomal subunits, and thus maintains levels of free tRNAs and 50S ribosomes. In Oleidesulfovibrio alaskensis (strain ATCC BAA-1058 / DSM 17464 / G20) (Desulfovibrio alaskensis), this protein is Peptidyl-tRNA hydrolase.